Reading from the N-terminus, the 84-residue chain is Putative membrane protein insertion efficiency factor (84 aa).

The protein belongs to the UPF0161 family.

The protein resides in the cell inner membrane. Its function is as follows. Could be involved in insertion of integral membrane proteins into the membrane. The sequence is that of Putative membrane protein insertion efficiency factor from Shewanella amazonensis (strain ATCC BAA-1098 / SB2B).